The primary structure comprises 406 residues: Kelch domain-containing protein 2 (406 aa).

Kelch repeat units lie at residues 31–85, 92–136, 148–207, 221–259, 271–311, and 322–359; these read ERSG…NTEG, SGSC…ERID, LGVW…AWSQ, HACA…NELI, HSLT…IQFN, and HTAC…IFSV.

In terms of assembly, component of a CRL2(KLHDC2) E3 ubiquitin-protein ligase complex, also named ECS(KLHDC2) complex, composed of CUL2, Elongin BC (ELOB and ELOC), RBX1 and substrate-specific adapter KLHDC2. May form oligomers as a KLHDC2-ELOB-ELOC complex; this interaction is autoinhibitory for the E3 ligase complex as the substrate-binding site of KLHDC2 is blocked in the oligomer. Interacts with CREB3; interaction is direct and specific as it does not interact with CREB1, ATF4, ATF6, JUN, FOS, CEBPA or herpes simplex virus transactivator VP16. Autoubiquitinated by the CRL2(KLHDC2) E3 ligase complex.

The protein resides in the nucleus. It participates in protein modification; protein ubiquitination. Functionally, substrate-recognition component of a Cul2-RING (CRL2) E3 ubiquitin-protein ligase complex of the DesCEND (destruction via C-end degrons) pathway, which recognizes a C-degron located at the extreme C terminus of target proteins, leading to their ubiquitination and degradation. The C-degron recognized by the DesCEND pathway is usually a motif of less than ten residues and can be present in full-length proteins, truncated proteins or proteolytically cleaved forms. The CRL2(KLHDC2) complex specifically recognizes proteins with a diglycine (Gly-Gly) at the C-terminus, leading to their ubiquitination and degradation. The CRL2(KLHDC2) complex mediates ubiquitination and degradation of truncated SELENOK and SELENOS selenoproteins produced by failed UGA/Sec decoding, which end with a diglycine. The CRL2(KLHDC2) complex also recognizes proteolytically cleaved proteins ending with Gly-Gly, such as the N-terminal fragment of USP1, leading to their degradation. May also act as an indirect repressor of CREB3-mediated transcription by interfering with CREB3-DNA-binding. This is Kelch domain-containing protein 2 from Rattus norvegicus (Rat).